The primary structure comprises 474 residues: tRNA-2-methylthio-N(6)-dimethylallyladenosine synthase (474 aa).

The MTTase N-terminal domain maps to 3-120; that stretch reads KKLLIKTWGC…LPEMIKQSQS (118 aa). [4Fe-4S] cluster-binding residues include Cys-12, Cys-49, Cys-83, Cys-157, Cys-161, and Cys-164. One can recognise a Radical SAM core domain in the interval 143 to 375; it reads RAEGATAFVS…QQQINAQAMR (233 aa). In terms of domain architecture, TRAM spans 378-441; that stretch reads RLMLGTEQRV…ANSLRGEIVR (64 aa).

Belongs to the methylthiotransferase family. MiaB subfamily. Monomer. [4Fe-4S] cluster is required as a cofactor.

Its subcellular location is the cytoplasm. The catalysed reaction is N(6)-dimethylallyladenosine(37) in tRNA + (sulfur carrier)-SH + AH2 + 2 S-adenosyl-L-methionine = 2-methylsulfanyl-N(6)-dimethylallyladenosine(37) in tRNA + (sulfur carrier)-H + 5'-deoxyadenosine + L-methionine + A + S-adenosyl-L-homocysteine + 2 H(+). Catalyzes the methylthiolation of N6-(dimethylallyl)adenosine (i(6)A), leading to the formation of 2-methylthio-N6-(dimethylallyl)adenosine (ms(2)i(6)A) at position 37 in tRNAs that read codons beginning with uridine. The polypeptide is tRNA-2-methylthio-N(6)-dimethylallyladenosine synthase (Vibrio vulnificus (strain YJ016)).